Here is an 89-residue protein sequence, read N- to C-terminus: Alpha-latrotoxin associated low molecular weight protein SGV242-280 (89 aa).

The signal sequence occupies residues 1–18 (MSKLHFLILLSVIVSVFC).

The protein belongs to the arthropod CHH/MIH/GIH/VIH hormone family. In terms of tissue distribution, expressed by the venom gland.

It is found in the secreted. In terms of biological role, may increase the toxicity of alpha-latrotoxin and/or other venom components. Is non-toxic to mice and to the cockroach Periplaneta americana. The protein is Alpha-latrotoxin associated low molecular weight protein SGV242-280 of Steatoda grossa (False black widow).